A 739-amino-acid polypeptide reads, in one-letter code: Thiamine biosynthesis multifunctional protein ThiED (739 aa).

Residues 1–210 form a thiamine-phosphate synthase region; sequence MTDFSLYLVT…PSPAEAAREL (210 aa). Residues 37 to 41 and asparagine 69 contribute to the 4-amino-2-methyl-5-(diphosphooxymethyl)pyrimidine site; that span reads QLRDK. Mg(2+) contacts are provided by aspartate 70 and aspartate 88. Threonine 107 is a binding site for 4-amino-2-methyl-5-(diphosphooxymethyl)pyrimidine. Residue 140 to 142 coordinates 2-[(2R,5Z)-2-carboxy-4-methylthiazol-5(2H)-ylidene]ethyl phosphate; it reads TDT. Residue lysine 143 participates in 4-amino-2-methyl-5-(diphosphooxymethyl)pyrimidine binding. 2-[(2R,5Z)-2-carboxy-4-methylthiazol-5(2H)-ylidene]ethyl phosphate is bound by residues glycine 174 and 194–195; that span reads VS. Residues 226-481 are hydroxymethylpyrimidine/phosphomethylpyrimidine kinase; the sequence is LTIAGTDPTG…GSGSGPVDHF (256 aa). Glutamine 263 provides a ligand contact to 4-amino-5-hydroxymethyl-2-methylpyrimidine. Residues 527-739 are thiaminase-2; it reads YTRALWEATG…FDQATRQGWN (213 aa).

The protein in the N-terminal section; belongs to the thiamine-phosphate synthase family. This sequence in the central section; belongs to the ThiD family. It in the C-terminal section; belongs to the thiaminase-2 family. Mg(2+) is required as a cofactor.

It carries out the reaction 2-[(2R,5Z)-2-carboxy-4-methylthiazol-5(2H)-ylidene]ethyl phosphate + 4-amino-2-methyl-5-(diphosphooxymethyl)pyrimidine + 2 H(+) = thiamine phosphate + CO2 + diphosphate. It catalyses the reaction 2-(2-carboxy-4-methylthiazol-5-yl)ethyl phosphate + 4-amino-2-methyl-5-(diphosphooxymethyl)pyrimidine + 2 H(+) = thiamine phosphate + CO2 + diphosphate. The catalysed reaction is 4-methyl-5-(2-phosphooxyethyl)-thiazole + 4-amino-2-methyl-5-(diphosphooxymethyl)pyrimidine + H(+) = thiamine phosphate + diphosphate. The enzyme catalyses 4-amino-5-hydroxymethyl-2-methylpyrimidine + ATP = 4-amino-2-methyl-5-(phosphooxymethyl)pyrimidine + ADP + H(+). It carries out the reaction 4-amino-2-methyl-5-(phosphooxymethyl)pyrimidine + ATP = 4-amino-2-methyl-5-(diphosphooxymethyl)pyrimidine + ADP. It functions in the pathway cofactor biosynthesis; thiamine diphosphate biosynthesis; 4-amino-2-methyl-5-diphosphomethylpyrimidine from 5-amino-1-(5-phospho-D-ribosyl)imidazole: step 3/3. It participates in cofactor biosynthesis; thiamine diphosphate biosynthesis; thiamine phosphate from 4-amino-2-methyl-5-diphosphomethylpyrimidine and 4-methyl-5-(2-phosphoethyl)-thiazole: step 1/1. Condenses 4-methyl-5-(beta-hydroxyethyl)thiazole monophosphate (THZ-P) and 2-methyl-4-amino-5-hydroxymethyl pyrimidine pyrophosphate (HMP-PP) to form thiamine monophosphate (TMP). Its function is as follows. Catalyzes the phosphorylation of hydroxymethylpyrimidine phosphate (HMP-P) to HMP-PP, and of HMP to HMP-P. This chain is Thiamine biosynthesis multifunctional protein ThiED (thiED), found in Corynebacterium efficiens (strain DSM 44549 / YS-314 / AJ 12310 / JCM 11189 / NBRC 100395).